Consider the following 500-residue polypeptide: Protein SLENDER RICE1-LIKE 2 (500 aa).

Residues 68–454 (KELEKMALRS…QRLYSASAWR (387 aa)) form the GRAS domain. The leucine repeat I (LRI) stretch occupies residues 75–135 (LRSVNLMVTC…DALAERLFPA (61 aa)). The tract at residues 154–219 (FRGFYEAGPY…GGPPFLRITG (66 aa)) is VHIID. Positions 185–189 (VHVID) match the VHIID motif. A leucine repeat II (LRII) region spans residues 233 to 265 (DVGLRLAEFARSCSVPFAFRGIAADQLDGLRPW). Residues 275–376 (VAINSVLQLH…EAYLQGEIAD (102 aa)) form a PFYRE region. The LXXLL motif signature appears at 283-287 (LHRLL). Residues 379-454 (SREGSSRVER…QRLYSASAWR (76 aa)) form an SAW region. Residues 466 to 500 (SGAADAMEESQNSNTNGGGGGSSGGGHGALNQIMQ) are disordered. Over residues 481 to 493 (NGGGGGSSGGGHG) the composition is skewed to gly residues.

Belongs to the GRAS family. Expressed at low levels in leaf blades, leaf sheaths, rachis and flowers. Expressed in the embryo of immature seeds.

Its subcellular location is the nucleus. Its function is as follows. Probable transcriptional regulator that acts as a repressor of the gibberellin (GA) signaling pathway. Its repressive activity is weaker than that of SLR1. Its overexpression prevents the GA signaling pathway and induces a dwarf phenotype in Arabidopsis thaliana plants. This Oryza sativa subsp. japonica (Rice) protein is Protein SLENDER RICE1-LIKE 2.